We begin with the raw amino-acid sequence, 277 residues long: Glutamate racemase (277 aa).

Substrate contacts are provided by residues 13–14 (DS) and 45–46 (YG). Catalysis depends on Cys-77, which acts as the Proton donor/acceptor. Residue 78-79 (NT) coordinates substrate. Catalysis depends on Cys-192, which acts as the Proton donor/acceptor. 193 to 194 (TH) lines the substrate pocket.

This sequence belongs to the aspartate/glutamate racemases family.

It catalyses the reaction L-glutamate = D-glutamate. It participates in cell wall biogenesis; peptidoglycan biosynthesis. Provides the (R)-glutamate required for cell wall biosynthesis. This chain is Glutamate racemase, found in Rhizobium meliloti (strain 1021) (Ensifer meliloti).